The primary structure comprises 298 residues: NFU1 iron-sulfur cluster scaffold homolog, mitochondrial (298 aa).

Residues 194-262 (IKELLDTRIR…IPEVESVEQV (69 aa)) form a nifU region. [4Fe-4S] cluster is bound by residues C231 and C234.

It belongs to the NifU family.

Its subcellular location is the mitochondrion. Molecular scaffold for [Fe-S] cluster assembly of mitochondrial iron-sulfur proteins. The protein is NFU1 iron-sulfur cluster scaffold homolog, mitochondrial of Drosophila grimshawi (Hawaiian fruit fly).